We begin with the raw amino-acid sequence, 130 residues long: Small ribosomal subunit protein eS8 (130 aa).

This sequence belongs to the eukaryotic ribosomal protein eS8 family. As to quaternary structure, part of the 30S ribosomal subunit.

The protein is Small ribosomal subunit protein eS8 of Thermococcus gammatolerans (strain DSM 15229 / JCM 11827 / EJ3).